The chain runs to 280 residues: 2-C-methyl-D-erythritol 4-phosphate cytidylyltransferase (280 aa).

Belongs to the IspD/TarI cytidylyltransferase family. IspD subfamily.

It carries out the reaction 2-C-methyl-D-erythritol 4-phosphate + CTP + H(+) = 4-CDP-2-C-methyl-D-erythritol + diphosphate. The protein operates within isoprenoid biosynthesis; isopentenyl diphosphate biosynthesis via DXP pathway; isopentenyl diphosphate from 1-deoxy-D-xylulose 5-phosphate: step 2/6. Functionally, catalyzes the formation of 4-diphosphocytidyl-2-C-methyl-D-erythritol from CTP and 2-C-methyl-D-erythritol 4-phosphate (MEP). The sequence is that of 2-C-methyl-D-erythritol 4-phosphate cytidylyltransferase from Psychrobacter cryohalolentis (strain ATCC BAA-1226 / DSM 17306 / VKM B-2378 / K5).